The chain runs to 166 residues: Endoribonuclease YbeY (166 aa).

Zn(2+) is bound by residues H132, H136, and H142.

Belongs to the endoribonuclease YbeY family. It depends on Zn(2+) as a cofactor.

The protein resides in the cytoplasm. Its function is as follows. Single strand-specific metallo-endoribonuclease involved in late-stage 70S ribosome quality control and in maturation of the 3' terminus of the 16S rRNA. The protein is Endoribonuclease YbeY of Clostridium botulinum (strain Kyoto / Type A2).